Here is a 220-residue protein sequence, read N- to C-terminus: Adenylate kinase (220 aa).

12 to 17 (GAGKGT) is a binding site for ATP. Positions 32 to 62 (STGDIFRDIVKKENDELGKKIKEIMERGELV) are NMP. AMP contacts are provided by residues Thr33, Arg38, 60–62 (ELV), 88–91 (GYPR), and Gln95. Residues 129–166 (ARRICPKCGRIYNLISLPPKEDELCDDCKVKLVQREDD) form an LID region. Arg130 is a binding site for ATP. Zn(2+) contacts are provided by Cys133 and Cys136. 139-140 (IY) lines the ATP pocket. Zn(2+) contacts are provided by Cys153 and Cys156. The AMP site is built by Arg163 and Arg174. Ile202 is a binding site for ATP.

This sequence belongs to the adenylate kinase family. As to quaternary structure, monomer.

The protein localises to the cytoplasm. The enzyme catalyses AMP + ATP = 2 ADP. It functions in the pathway purine metabolism; AMP biosynthesis via salvage pathway; AMP from ADP: step 1/1. Its function is as follows. Catalyzes the reversible transfer of the terminal phosphate group between ATP and AMP. Plays an important role in cellular energy homeostasis and in adenine nucleotide metabolism. This Thermotoga maritima (strain ATCC 43589 / DSM 3109 / JCM 10099 / NBRC 100826 / MSB8) protein is Adenylate kinase.